Consider the following 384-residue polypeptide: UDP-galactopyranose mutase (384 aa).

The first 23 residues, 1–23 (MKSKKILIVGAGFSGAVIGRQLA), serve as a signal peptide directing secretion. FAD contacts are provided by residues serine 14, 33 to 34 (DQ), asparagine 41, and 60 to 61 (HI). UDP-alpha-D-galactose is bound by residues asparagine 84, phenylalanine 151, threonine 156, tryptophan 160, and tyrosine 185. Phenylalanine 219 is a binding site for FAD. The UDP-alpha-D-galactose site is built by asparagine 270, arginine 280, and tyrosine 314. Residue arginine 343 participates in FAD binding. Tyrosine 349 lines the UDP-alpha-D-galactose pocket. 350 to 355 (LDMDVT) is a binding site for FAD.

The protein belongs to the UDP-galactopyranose/dTDP-fucopyranose mutase family. Homodimer. FAD serves as cofactor.

It catalyses the reaction UDP-alpha-D-galactose = UDP-alpha-D-galactofuranose. Its pathway is bacterial outer membrane biogenesis; LPS O-antigen biosynthesis. Involved in the biosynthesis of the galactose-containing O-side-chain polysaccharide backbone structure of D-galactan I which is a key component of lipopolysaccharide (LPS). Catalyzes the interconversion through a 2-keto intermediate of uridine diphosphogalactopyranose (UDP-GalP) into uridine diphosphogalactofuranose (UDP-GalF) which is the biosynthetic precursor of galactofuranosyl residues. This is UDP-galactopyranose mutase (rfbD) from Klebsiella pneumoniae.